The primary structure comprises 329 residues: Tyrosine recombinase XerC 1 (329 aa).

In terms of domain architecture, Core-binding (CB) spans 14–101; the sequence is APPHPQIGAY…AWRGWYQWLA (88 aa). Positions 123 to 320 constitute a Tyr recombinase domain; sequence RLPKALSVEQ…DFQHLAKIYD (198 aa). Residues Arg-163, Lys-198, His-272, Arg-275, and His-298 contribute to the active site. Catalysis depends on Tyr-307, which acts as the O-(3'-phospho-DNA)-tyrosine intermediate.

This sequence belongs to the 'phage' integrase family. XerC subfamily. In terms of assembly, forms a cyclic heterotetrameric complex composed of two molecules of XerC and two molecules of XerD.

The protein localises to the cytoplasm. In terms of biological role, site-specific tyrosine recombinase, which acts by catalyzing the cutting and rejoining of the recombining DNA molecules. The XerC-XerD complex is essential to convert dimers of the bacterial chromosome into monomers to permit their segregation at cell division. It also contributes to the segregational stability of plasmids. The polypeptide is Tyrosine recombinase XerC 1 (xerC1) (Ralstonia nicotianae (strain ATCC BAA-1114 / GMI1000) (Ralstonia solanacearum)).